Consider the following 782-residue polypeptide: LPS-assembly protein LptD (782 aa).

Residues 1 to 23 (MNKKHTLISLAILTALYSQQSLA) form the signal peptide.

The protein belongs to the LptD family. In terms of assembly, component of the lipopolysaccharide transport and assembly complex. Interacts with LptE and LptA.

Its subcellular location is the cell outer membrane. Together with LptE, is involved in the assembly of lipopolysaccharide (LPS) at the surface of the outer membrane. The chain is LPS-assembly protein LptD from Haemophilus influenzae (strain 86-028NP).